A 336-amino-acid chain; its full sequence is Non-structural maintenance of chromosomes element 1 (336 aa).

The segment at 268 to 327 (LNTCQNCHKLAIQGVRCGNESCREENEETGENSLSQIWHVDCFKHYITHVSKNCDRCGSS) adopts an RING-type; atypical zinc-finger fold.

This sequence belongs to the NSE1 family. Component of the Smc5-Smc6 complex which consists of KRE29, MMS21, NSE1, NSE3, NSE4, NSE5, SMC5 and SMC6. Interacts with SMC5 and SMC6. Interacts with NSE3.

The protein resides in the nucleus. The enzyme catalyses S-ubiquitinyl-[E2 ubiquitin-conjugating enzyme]-L-cysteine + [acceptor protein]-L-lysine = [E2 ubiquitin-conjugating enzyme]-L-cysteine + N(6)-ubiquitinyl-[acceptor protein]-L-lysine.. Its function is as follows. Acts in a DNA repair pathway for removal of UV-induced DNA damage that is distinct from classical nucleotide excision repair and in repair of ionizing radiation damage. Functions in homologous recombination repair of DNA double strand breaks and in recovery of stalled replication forks. The polypeptide is Non-structural maintenance of chromosomes element 1 (NSE1) (Saccharomyces cerevisiae (strain ATCC 204508 / S288c) (Baker's yeast)).